A 393-amino-acid polypeptide reads, in one-letter code: 5-amino-6-(D-ribitylamino)uracil--L-tyrosine 4-hydroxyphenyl transferase (393 aa).

One can recognise a Radical SAM core domain in the interval Val-71–Asn-318. [4Fe-4S] cluster contacts are provided by Cys-85, Cys-89, and Cys-92.

It belongs to the radical SAM superfamily. CofH family. In terms of assembly, consists of two subunits, CofG and CofH. The cofactor is [4Fe-4S] cluster.

It catalyses the reaction 5-amino-6-(D-ribitylamino)uracil + L-tyrosine + S-adenosyl-L-methionine = 5-amino-5-(4-hydroxybenzyl)-6-(D-ribitylimino)-5,6-dihydrouracil + 2-iminoacetate + 5'-deoxyadenosine + L-methionine + H(+). The protein operates within cofactor biosynthesis; coenzyme F0 biosynthesis. In terms of biological role, catalyzes the radical-mediated synthesis of 5-amino-5-(4-hydroxybenzyl)-6-(D-ribitylimino)-5,6-dihydrouracil from 5-amino-6-(D-ribitylamino)uracil and L-tyrosine. The protein is 5-amino-6-(D-ribitylamino)uracil--L-tyrosine 4-hydroxyphenyl transferase of Trichodesmium erythraeum (strain IMS101).